Reading from the N-terminus, the 48-residue chain is Large ribosomal subunit protein bL34c (48 aa).

It belongs to the bacterial ribosomal protein bL34 family.

The protein resides in the plastid. Its subcellular location is the chloroplast. This Thalassiosira pseudonana (Marine diatom) protein is Large ribosomal subunit protein bL34c.